A 288-amino-acid chain; its full sequence is Sulfur carrier protein FdhD (288 aa).

The active-site Cysteine persulfide intermediate is Cys122. 268 to 273 lines the Mo-bis(molybdopterin guanine dinucleotide) pocket; the sequence is FVRGER.

Belongs to the FdhD family.

It localises to the cytoplasm. In terms of biological role, required for formate dehydrogenase (FDH) activity. Acts as a sulfur carrier protein that transfers sulfur from IscS to the molybdenum cofactor prior to its insertion into FDH. The polypeptide is Sulfur carrier protein FdhD (Anaeromyxobacter sp. (strain K)).